The chain runs to 428 residues: Histidine--tRNA ligase (428 aa).

The protein belongs to the class-II aminoacyl-tRNA synthetase family. As to quaternary structure, homodimer.

The protein localises to the cytoplasm. It catalyses the reaction tRNA(His) + L-histidine + ATP = L-histidyl-tRNA(His) + AMP + diphosphate + H(+). The sequence is that of Histidine--tRNA ligase from Pseudomonas entomophila (strain L48).